Reading from the N-terminus, the 838-residue chain is MQEQEIGFISKYNEGLCVNTDPVSILTSILDMSLHRQMGSDRDLQSSASSVSLPSVKKAPKKRRISIGSLFRRKKDNKRKSRELNGGVDGIASIESIHSEMCTDKNSIFSTNTSSDNGLTSISKQIGDFIECPLCLLRHSKDRFPDIMTCHHRSCVDCLRQYLRIEISESRVNISCPECTERFNPHDIRLILSDDVLMEKYEEFMLRRWLVADPDCRWCPAPDCGYAVIAFGCASCPKLTCGREGCGTEFCYHCKQIWHPNQTCDAARQERAQSLRLRTIRSSSISYSQESGAAADDIKPCPRCAAYIIKMNDGSCNHMTCAVCGCEFCWLCMKEISDLHYLSPSGCTFWGKKPWSRKKKILWQLGTLVGAPVGIALIAGIAIPAMIIGIPVYVGRKIHNRYEGKDVSKHKRNLAIAGGVTLSVIVSPVVAAVTVGIGVPIMLAYVYGVVPISLCRSGGCGVSAGNGKGVRIEFDDENDINVGGTNTAVDTTSVAEARHNPSIGEGSVGGLTGSLSASGSHMDRIGAIRDNLSETASTMALAGASITGSLSGSAMVNCFNRLEVQADVQKERYSLSGESGTVSLGTVSDNASTKAMAGSILNSYIPLDKEGNSMEVQVDIESKPSKFRHNSGSSSVDDGSATRSHAGGSSSGLPEGKSSATKWSKEATAGKKSKSGKLRKKGNMKINETREDMDAQLLEQQSTNSSEFEAPSLSDSMPSVADSHSSHFSEFSCSDLESMKTSCSHGSSDYHTRFATVNILPEVENDRLENSPHQCSISVVTQTASCSEVSQLNHIAEEHGNNGIKPNVDLYFGDALKETNNNHSHQTMELKVAIQTEI.

Residues 41-61 (DRDLQSSASSVSLPSVKKAPK) are disordered. Residues 46-57 (SSASSVSLPSVK) are compositionally biased toward low complexity. The TRIAD supradomain stretch occupies residues 128 to 351 (DFIECPLCLL…LSPSGCTFWG (224 aa)). Residues cysteine 132, cysteine 135, cysteine 150, histidine 152, cysteine 155, cysteine 158, cysteine 176, cysteine 179, cysteine 219, cysteine 224, cysteine 241, cysteine 246, cysteine 251, cysteine 254, histidine 259, cysteine 264, cysteine 301, and cysteine 304 each coordinate Zn(2+). The segment at 132 to 179 (CPLCLLRHSKDRFPDIMTCHHRSCVDCLRQYLRIEISESRVNISCPEC) adopts an RING-type 1 zinc-finger fold. The IBR-type zinc-finger motif lies at 199–264 (EKYEEFMLRR…KQIWHPNQTC (66 aa)). The RING-type 2; atypical zinc-finger motif lies at 301-332 (CPRCAAYIIKMNDGSCNHMTCAVCGCEFCWLC). The active site involves cysteine 316. Positions 321, 324, 329, 332, 340, and 347 each coordinate Zn(2+). The next 2 helical transmembrane spans lie at 368-388 (LVGA…AMII) and 424-444 (VIVS…IMLA). 2 disordered regions span residues 622 to 685 (SKPS…GNMK) and 700 to 721 (QQST…PSVA). The segment covering 630–662 (NSGSSSVDDGSATRSHAGGSSSGLPEGKSSATK) has biased composition (polar residues). Serine 631 is modified (phosphoserine). Residues 660 to 838 (ATKWSKEATA…ELKVAIQTEI (179 aa)) form an interaction with CASR region. Basic residues predominate over residues 671–683 (KKSKSGKLRKKGN). Positions 700 to 717 (QQSTNSSEFEAPSLSDSM) are enriched in polar residues.

This sequence belongs to the RBR family. RNF19 subfamily. In terms of assembly, interacts with UBE2L3 and UBE2L6. Interacts with transcription factor Sp1. Interacts with VCP, CASR, SNCAIP and with some SOD1 variants which cause amyotrophic lateral sclerosis, but not with wild-type SOD1. Widely expressed, with highest levels in heart. Ubiquitously expressed in the central nervous system.

The protein resides in the membrane. It localises to the cytoplasm. It is found in the cytoskeleton. The protein localises to the microtubule organizing center. Its subcellular location is the centrosome. It catalyses the reaction [E2 ubiquitin-conjugating enzyme]-S-ubiquitinyl-L-cysteine + [acceptor protein]-L-lysine = [E2 ubiquitin-conjugating enzyme]-L-cysteine + [acceptor protein]-N(6)-ubiquitinyl-L-lysine.. The protein operates within protein modification; protein ubiquitination. E3 ubiquitin-protein ligase which accepts ubiquitin from E2 ubiquitin-conjugating enzymes UBE2L3 and UBE2L6 in the form of a thioester and then directly transfers the ubiquitin to targeted substrates, such as SNCAIP or CASR. Specifically ubiquitinates pathogenic SOD1 variants, which leads to their proteasomal degradation and to neuronal protection. This chain is E3 ubiquitin-protein ligase RNF19A (RNF19A), found in Homo sapiens (Human).